The sequence spans 256 residues: Omega-amidase YafV (256 aa).

In terms of domain architecture, CN hydrolase spans 4–234 (LKITLLQQPL…ATRIDAELSM (231 aa)). Glu-42 functions as the Proton acceptor in the catalytic mechanism. Residue Lys-107 is part of the active site. The Nucleophile role is filled by Cys-141.

The protein belongs to the carbon-nitrogen hydrolase superfamily. NIT1/NIT2 family.

The catalysed reaction is a monoamide of a dicarboxylate + H2O = a dicarboxylate + NH4(+). Its function is as follows. Hydrolyzes alpha-ketoglutaramate (a-KGM) to alpha-ketoglutarate (alpha-KG) and ammonia (specific activity 6.65 umol/min/mg), has weak activity on L-glutamine, almost no activity on deaminated glutathione (dGSH) and none on glutathione. May function as a metabolite repair enzyme. The polypeptide is Omega-amidase YafV (yafV) (Escherichia coli (strain B / BL21-DE3)).